Here is a 1003-residue protein sequence, read N- to C-terminus: Putative helicase MOV-10 (1003 aa).

Position 148 is an N6-acetyllysine (Lys-148). Phosphothreonine occurs at positions 160 and 254. Residue Ser-432 is modified to Phosphoserine. 524-531 is a binding site for ATP; that stretch reads GPPGTGKT. Residues 645–648 carry the DEAG box motif; sequence DEAG. The interval 921–965 is interaction with AGO2 and APOBEC3G; sequence NPLLLGHDPDWKVFLEFCKENGGYTGCPFPAKLDLQQGQNLLQGL. The tract at residues 968 to 1003 is disordered; that stretch reads LSPSTSGLKSHDYLPQEREGEEGLSLQVEPEWRNEL. 2 positions are modified to phosphoserine: Ser-969 and Ser-977. The span at 976-985 shows a compositional bias: basic and acidic residues; the sequence is KSHDYLPQER.

This sequence belongs to the DNA2/NAM7 helicase family. SDE3 subfamily. As to quaternary structure, interacts with DICER1, AGO2, TARBP2, EIF6 and RPL7A (60S ribosome subunit); they form a large RNA-induced silencing complex (RISC). Interacts with APOBEC3G in an RNA-dependent manner. Interacts with TRIM71 (via NHL repeats) in an RNA-dependent manner. Interacts with both protein products of LIRE1, ORF1p and ORF2p. Interacts with TUT4 and, to a lesser extent, TUT7; the interactions are RNA-dependent. Interacts with AGO2, TNRC6B and UPF1; the interactions are direct and RNA-dependent. Interacts with FMR1; this interaction is direct, occurs in an RNA-dependent manner on polysomes and induces association of MOV10 with RNAs. Interacts with SHFL; the interaction increases in presence of RNA. Interacts with DHX34; the interaction is-RNA independent. Interacts with RBM46. In terms of processing, ubiquitinated by the DCX(DCAF12) complex that specifically recognizes the glutamate-leucine (Glu-Leu) degron at the C-terminus, leading to its degradation.

The protein resides in the cytoplasm. It localises to the P-body. Its subcellular location is the cytoplasmic ribonucleoprotein granule. The protein localises to the stress granule. It is found in the nucleus. The enzyme catalyses ATP + H2O = ADP + phosphate + H(+). Its function is as follows. 5' to 3' RNA helicase that is involved in a number of cellular roles ranging from mRNA metabolism and translation, modulation of viral infectivity, inhibition of retrotransposition, or regulation of synaptic transmission. Plays an important role in innate antiviral immunity by promoting type I interferon production. Mechanistically, specifically uses IKKepsilon/IKBKE as the mediator kinase for IRF3 activation. Contributes to UPF1 mRNA target degradation by translocation along 3' UTRs. Required for microRNA (miRNA)-mediated gene silencing by the RNA-induced silencing complex (RISC). Required for both miRNA-mediated translational repression and miRNA-mediated cleavage of complementary mRNAs by RISC. In cooperation with FMR1, regulates miRNA-mediated translational repression by AGO2. Restricts retrotransposition of long interspersed element-1 (LINE-1) in cooperation with TUT4 and TUT7 counteracting the RNA chaperonne activity of L1RE1. Facilitates LINE-1 uridylation by TUT4 and TUT7. Required for embryonic viability and for normal central nervous system development and function. Plays two critical roles in early brain development: suppresses retroelements in the nucleus by directly inhibiting cDNA synthesis, while regulates cytoskeletal mRNAs to influence neurite outgrowth in the cytosol. May function as a messenger ribonucleoprotein (mRNP) clearance factor. This is Putative helicase MOV-10 (MOV10) from Bos taurus (Bovine).